A 210-amino-acid chain; its full sequence is MAAARASLGRIFPESSILFLCDMQEKLRDRVLYFPQIVSMAARMLKVARILDVPVLLTEHYPQGLGPTVPELGAQGVRTMSKTSFSMVPPLQQELDKLPQLKSVLLCGIETQVCILNTALDLLDRGLQVHVAVDACSSQSEMNRLVALARMQHSGVFLSTSEALTLQLIKDAAHPQFKEIQKILKEPVPEIGLLGFFQGMNNPLLPNSRP.

Ser-7 is subject to Phosphoserine.

It belongs to the isochorismatase family. In terms of assembly, interacts with CDKN2A.

The protein resides in the cytoplasm. It localises to the nucleus. This Rattus norvegicus (Rat) protein is Isochorismatase domain-containing protein 2 (Isoc2).